Consider the following 674-residue polypeptide: DNA ligase (674 aa).

NAD(+) is bound by residues 42–46 (DNVYD), 91–92 (SM), and glutamate 121. The N6-AMP-lysine intermediate role is filled by lysine 123. The NAD(+) site is built by arginine 144, glutamate 178, lysine 294, and lysine 318. 4 residues coordinate Zn(2+): cysteine 412, cysteine 415, cysteine 430, and cysteine 435. The BRCT domain occupies 596–674 (VKDSFVAGKT…ETELLANLKD (79 aa)).

This sequence belongs to the NAD-dependent DNA ligase family. LigA subfamily. The cofactor is Mg(2+). Requires Mn(2+) as cofactor.

It catalyses the reaction NAD(+) + (deoxyribonucleotide)n-3'-hydroxyl + 5'-phospho-(deoxyribonucleotide)m = (deoxyribonucleotide)n+m + AMP + beta-nicotinamide D-nucleotide.. Functionally, DNA ligase that catalyzes the formation of phosphodiester linkages between 5'-phosphoryl and 3'-hydroxyl groups in double-stranded DNA using NAD as a coenzyme and as the energy source for the reaction. It is essential for DNA replication and repair of damaged DNA. This chain is DNA ligase, found in Lacticaseibacillus casei (strain BL23) (Lactobacillus casei).